Consider the following 315-residue polypeptide: Ribosomal RNA small subunit methyltransferase H (315 aa).

S-adenosyl-L-methionine-binding positions include 35-37, Asp55, Phe84, Asp105, and Gln112; that span reads AGH.

This sequence belongs to the methyltransferase superfamily. RsmH family.

Its subcellular location is the cytoplasm. The catalysed reaction is cytidine(1402) in 16S rRNA + S-adenosyl-L-methionine = N(4)-methylcytidine(1402) in 16S rRNA + S-adenosyl-L-homocysteine + H(+). Functionally, specifically methylates the N4 position of cytidine in position 1402 (C1402) of 16S rRNA. The protein is Ribosomal RNA small subunit methyltransferase H of Streptococcus agalactiae serotype Ia (strain ATCC 27591 / A909 / CDC SS700).